The chain runs to 150 residues: Large ribosomal subunit protein bL9 (150 aa).

Belongs to the bacterial ribosomal protein bL9 family.

Its function is as follows. Binds to the 23S rRNA. In Pseudoalteromonas translucida (strain TAC 125), this protein is Large ribosomal subunit protein bL9.